The chain runs to 141 residues: Large ribosomal subunit protein uL11 (141 aa).

The protein belongs to the universal ribosomal protein uL11 family. As to quaternary structure, part of the ribosomal stalk of the 50S ribosomal subunit. Interacts with L10 and the large rRNA to form the base of the stalk. L10 forms an elongated spine to which L12 dimers bind in a sequential fashion forming a multimeric L10(L12)X complex. One or more lysine residues are methylated.

Its function is as follows. Forms part of the ribosomal stalk which helps the ribosome interact with GTP-bound translation factors. The polypeptide is Large ribosomal subunit protein uL11 (Campylobacter lari (strain RM2100 / D67 / ATCC BAA-1060)).